The primary structure comprises 592 residues: Probable auxin efflux carrier component 1c (592 aa).

The Extracellular segment spans residues 1-6 (MITGAD). The chain crosses the membrane as a helical span at residues 7–27 (FYHVMTAMVPLYVAMILAYGS). At 28 to 38 (VKWWRIFTPDQ) the chain is on the cytoplasmic side. Residues 39 to 59 (CSGINRFVALFAVPLLSFHFI) traverse the membrane as a helical segment. V51 is a (indol-3-yl)acetate binding site. The Extracellular segment spans residues 60–70 (STNNPYTMNLR). A helical membrane pass occupies residues 71–91 (FIAADTLQKLIVLALLTLWSH). The Cytoplasmic segment spans residues 92 to 100 (LSRRGSLEW). A helical transmembrane segment spans residues 101 to 121 (TITLFSLSTLPNTLVMGIPLL). Residues N112 and L114 each coordinate (indol-3-yl)acetate. The Extracellular segment spans residues 122 to 131 (KGMYGEFSGS). Residues 132-152 (LMVQIVVLQCIIWYTLMLFMF) traverse the membrane as a helical segment. Y145 is a (indol-3-yl)acetate binding site. Topologically, residues 153–452 (EYRGARILIT…LIRNPNTYSS (300 aa)) are cytoplasmic. Disordered stretches follow at residues 214–236 (RSDV…SNLT) and 282–331 (GATP…AKGE). A compositionally biased stretch (polar residues) spans 224-236 (GFSSTTPRPSNLT). Pro residues predominate over residues 309–318 (APNPAMAAPP). Residues 453-473 (LIGLIWSLVCFRWNFEMPAII) traverse the membrane as a helical segment. Topologically, residues 474–476 (LKS) are extracellular. The chain crosses the membrane as a helical span at residues 477 to 497 (ISILSDAGLGMAMFSLGLFMA). The Cytoplasmic segment spans residues 498-511 (LQPRIIACGNKVAT). Residues 512-532 (FAMAVRFLTGPAVMAAASIAV) form a helical membrane-spanning segment. The Extracellular portion of the chain corresponds to 533-537 (GLRGT). A helical transmembrane segment spans residues 538 to 558 (LLHVAIVQAALPQGIVPFVFA). Positions 552 and 553 each coordinate (indol-3-yl)acetate. The Cytoplasmic segment spans residues 559–571 (KEYSVHPDILSTA). Residues 572–592 (VIFGMLIALPITLVYYILLGL) traverse the membrane as a helical segment.

Belongs to the auxin efflux carrier (TC 2.A.69.1) family. Homodimer. As to expression, expressed at low levels in roots and leaves. Expressed in roots, stem bases, stems, leaves and young panicles.

The protein localises to the membrane. Its function is as follows. May act as a component of the auxin efflux carrier. The polypeptide is Probable auxin efflux carrier component 1c (Oryza sativa subsp. japonica (Rice)).